Reading from the N-terminus, the 529-residue chain is Neuronal acetylcholine receptor subunit alpha-2 (529 aa).

Residues 1–26 (MGPSCPVFLSFTKLSLWWLLLTPAGG) form the signal peptide. The interval 27–56 (EEAKRPPPRAPGDPLSSPSPTALPQGGSHT) is disordered. Residues 27–264 (EEAKRPPPRA…VTYAFVIRRL (238 aa)) lie on the Extracellular side of the membrane. N-linked (GlcNAc...) asparagine glycosylation is found at N79 and N129. C183 and C197 are oxidised to a cystine. Residue N235 is glycosylated (N-linked (GlcNAc...) asparagine). The cysteines at positions 247 and 248 are disulfide-linked. 3 helical membrane passes run 265–289 (PLFYTINLIIPCLLISCLTVLVFYL), 297–315 (ITLCISVLLSLTVFLLLIT), and 331–352 (YLLFTMIFVTLSIVITVFVLNV). Topologically, residues 353–502 (HHRSPSTHTM…WKYVAMVIDR (150 aa)) are cytoplasmic. A helical membrane pass occupies residues 503 to 521 (IFLWLFIIVCFLGTIGLFL).

It belongs to the ligand-gated ion channel (TC 1.A.9) family. Acetylcholine receptor (TC 1.A.9.1) subfamily. Alpha-2/CHRNA2 sub-subfamily. In terms of assembly, neuronal AChR is composed of two different types of subunits: alpha and non-alpha (beta). CHRNA2/alpha-2 subunit can be combined to CHRNB2/beta-2 or CHRNB4/beta-4 to give rise to functional receptors. Both CHRNA2:CHRNB2 and CHRNA2:CHRNB4 nAChR complexes are heteropentamers with two subtypes: LS (low agonist sensitivity) with a (CHRNA2)3:(CHRNB2/4)2 and HS (high agonist sensitivity) with a (CHRNA2)2:(CHRNB2/4)3 stoichiometries; the subtypes differ in their subunit binding interfaces which are involved in ligand binding.

It localises to the synaptic cell membrane. It is found in the cell membrane. The catalysed reaction is Ca(2+)(in) = Ca(2+)(out). It catalyses the reaction K(+)(in) = K(+)(out). The enzyme catalyses Na(+)(in) = Na(+)(out). Its function is as follows. Component of neuronal acetylcholine receptors (nAChRs) that function as pentameric, ligand-gated cation channels with high calcium permeability among other activities. nAChRs are excitatory neurotrasnmitter receptors formed by a collection of nAChR subunits known to mediate synaptic transmission in the nervous system and the neuromuscular junction. Each nAchR subunit confers differential attributes to channel properties, including activation, deactivation and desensitization kinetics, pH sensitivity, cation permeability, and binding to allosteric modulators. CHRNA2 forms heteropentameric neuronal acetylcholine receptors with CHRNB2 and CHRNB4 and plays a role in nicotine dependence. The chain is Neuronal acetylcholine receptor subunit alpha-2 from Homo sapiens (Human).